Here is a 107-residue protein sequence, read N- to C-terminus: MIDIEVLHRVAATLAERKKADPDSSYVSSLYAKGTDAICKKVAEEAAETIMAAKDKDMLHIVWEVTDLWFHSMVLLSHFGLSVDDVLAEFRRREGVSGIDEKKSRKN.

Belongs to the PRA-PH family.

The protein localises to the cytoplasm. It carries out the reaction 1-(5-phospho-beta-D-ribosyl)-ATP + H2O = 1-(5-phospho-beta-D-ribosyl)-5'-AMP + diphosphate + H(+). It functions in the pathway amino-acid biosynthesis; L-histidine biosynthesis; L-histidine from 5-phospho-alpha-D-ribose 1-diphosphate: step 2/9. The protein is Phosphoribosyl-ATP pyrophosphatase of Azoarcus sp. (strain BH72).